The sequence spans 333 residues: Isopenicillin N synthase (333 aa).

Residues arginine 87, tyrosine 91, and tyrosine 191 each coordinate isopenicillin N. N-[(5S)-5-amino-5-carboxypentanoyl]-L-cysteinyl-D-valine contacts are provided by arginine 87, tyrosine 91, tyrosine 191, histidine 216, and aspartate 218. The Fe2OG dioxygenase domain maps to 180 to 290; that stretch reads DTLSCRSLMI…RLSLPFFLHA (111 aa). Fe(2+)-binding residues include histidine 216, aspartate 218, and histidine 272. Arginine 281 lines the 2-oxoglutarate pocket. Serine 283 contacts isopenicillin N. An N-[(5S)-5-amino-5-carboxypentanoyl]-L-cysteinyl-D-valine-binding site is contributed by serine 283.

This sequence belongs to the iron/ascorbate-dependent oxidoreductase family. Fe cation is required as a cofactor. Requires L-ascorbate as cofactor.

The catalysed reaction is N-[(5S)-5-amino-5-carboxypentanoyl]-L-cysteinyl-D-valine + O2 = isopenicillin N + 2 H2O. It participates in antibiotic biosynthesis; penicillin G biosynthesis; penicillin G from L-alpha-aminoadipate and L-cysteine and L-valine: step 2/3. In terms of biological role, removes, in the presence of oxygen, 4 hydrogen atoms from delta-L-(alpha-aminoadipyl)-L-cysteinyl-D-valine (ACV) to form the azetidinone and thiazolidine rings of isopenicillin. This is Isopenicillin N synthase (pcbC) from Streptomyces microflavus (Streptomyces lipmanii).